The following is a 466-amino-acid chain: ATP synthase subunit beta (466 aa).

An ATP-binding site is contributed by G156–T163.

Belongs to the ATPase alpha/beta chains family. As to quaternary structure, F-type ATPases have 2 components, CF(1) - the catalytic core - and CF(0) - the membrane proton channel. CF(1) has five subunits: alpha(3), beta(3), gamma(1), delta(1), epsilon(1). CF(0) has three main subunits: a(1), b(2) and c(9-12). The alpha and beta chains form an alternating ring which encloses part of the gamma chain. CF(1) is attached to CF(0) by a central stalk formed by the gamma and epsilon chains, while a peripheral stalk is formed by the delta and b chains.

The protein localises to the cell inner membrane. The catalysed reaction is ATP + H2O + 4 H(+)(in) = ADP + phosphate + 5 H(+)(out). In terms of biological role, produces ATP from ADP in the presence of a proton gradient across the membrane. The catalytic sites are hosted primarily by the beta subunits. This chain is ATP synthase subunit beta, found in Polynucleobacter necessarius subsp. necessarius (strain STIR1).